A 778-amino-acid polypeptide reads, in one-letter code: Endonuclease MutS2 (778 aa).

328-335 contributes to the ATP binding site; it reads GPNTGGKT. One can recognise a Smr domain in the interval 702-777; that stretch reads LDLRGKRYEE…GSGATIVTFK (76 aa).

Belongs to the DNA mismatch repair MutS family. MutS2 subfamily. In terms of assembly, homodimer. Binds to stalled ribosomes, contacting rRNA.

In terms of biological role, endonuclease that is involved in the suppression of homologous recombination and thus may have a key role in the control of bacterial genetic diversity. Acts as a ribosome collision sensor, splitting the ribosome into its 2 subunits. Detects stalled/collided 70S ribosomes which it binds and splits by an ATP-hydrolysis driven conformational change. Acts upstream of the ribosome quality control system (RQC), a ribosome-associated complex that mediates the extraction of incompletely synthesized nascent chains from stalled ribosomes and their subsequent degradation. Probably generates substrates for RQC. This chain is Endonuclease MutS2, found in Streptococcus pneumoniae (strain P1031).